Consider the following 244-residue polypeptide: Biosynthetic peptidoglycan transglycosylase (244 aa).

Residues 25–45 form a helical membrane-spanning segment; sequence LLLLLAIALLYQSWFLLHIIY.

This sequence belongs to the glycosyltransferase 51 family.

The protein localises to the cell inner membrane. The catalysed reaction is [GlcNAc-(1-&gt;4)-Mur2Ac(oyl-L-Ala-gamma-D-Glu-L-Lys-D-Ala-D-Ala)](n)-di-trans,octa-cis-undecaprenyl diphosphate + beta-D-GlcNAc-(1-&gt;4)-Mur2Ac(oyl-L-Ala-gamma-D-Glu-L-Lys-D-Ala-D-Ala)-di-trans,octa-cis-undecaprenyl diphosphate = [GlcNAc-(1-&gt;4)-Mur2Ac(oyl-L-Ala-gamma-D-Glu-L-Lys-D-Ala-D-Ala)](n+1)-di-trans,octa-cis-undecaprenyl diphosphate + di-trans,octa-cis-undecaprenyl diphosphate + H(+). It participates in cell wall biogenesis; peptidoglycan biosynthesis. Peptidoglycan polymerase that catalyzes glycan chain elongation from lipid-linked precursors. This Nitrosomonas eutropha (strain DSM 101675 / C91 / Nm57) protein is Biosynthetic peptidoglycan transglycosylase.